The chain runs to 45 residues: Photosystem II reaction center protein K (45 aa).

A propeptide spanning residues 1–8 (METALLLA) is cleaved from the precursor. A helical transmembrane segment spans residues 24–44 (LPLIPLFFLLLAFVWQASVGF).

Belongs to the PsbK family. As to quaternary structure, PSII is composed of 1 copy each of membrane proteins PsbA, PsbB, PsbC, PsbD, PsbE, PsbF, PsbH, PsbI, PsbJ, PsbK, PsbL, PsbM, PsbT, PsbX, PsbY, PsbZ, Psb30/Ycf12, peripheral proteins PsbO, CyanoQ (PsbQ), PsbU, PsbV and a large number of cofactors. It forms dimeric complexes.

The protein resides in the cellular thylakoid membrane. One of the components of the core complex of photosystem II (PSII). PSII is a light-driven water:plastoquinone oxidoreductase that uses light energy to abstract electrons from H(2)O, generating O(2) and a proton gradient subsequently used for ATP formation. It consists of a core antenna complex that captures photons, and an electron transfer chain that converts photonic excitation into a charge separation. The polypeptide is Photosystem II reaction center protein K (Microcystis aeruginosa (strain NIES-843 / IAM M-2473)).